The following is a 225-amino-acid chain: Putative O-phosphotransferase MT2714 (225 aa).

Position 30-37 (30-37 (GGSSAGKT)) interacts with ATP.

This sequence to S.violaceus chloramphenicol 3-O phosphotransferase.

This Mycobacterium tuberculosis (strain CDC 1551 / Oshkosh) protein is Putative O-phosphotransferase MT2714.